A 191-amino-acid polypeptide reads, in one-letter code: Orotate phosphoribosyltransferase (191 aa).

114 to 122 (EDVVTTGKS) provides a ligand contact to 5-phospho-alpha-D-ribose 1-diphosphate. Orotate is bound by residues T118 and R146.

The protein belongs to the purine/pyrimidine phosphoribosyltransferase family. PyrE subfamily. As to quaternary structure, homodimer. Requires Mg(2+) as cofactor.

It catalyses the reaction orotidine 5'-phosphate + diphosphate = orotate + 5-phospho-alpha-D-ribose 1-diphosphate. The protein operates within pyrimidine metabolism; UMP biosynthesis via de novo pathway; UMP from orotate: step 1/2. Catalyzes the transfer of a ribosyl phosphate group from 5-phosphoribose 1-diphosphate to orotate, leading to the formation of orotidine monophosphate (OMP). The polypeptide is Orotate phosphoribosyltransferase (Clostridium botulinum (strain Loch Maree / Type A3)).